A 468-amino-acid polypeptide reads, in one-letter code: UDP-glucosyl transferase 74CD1 (468 aa).

Residue Gly20 participates in UDP-alpha-D-glucose binding. His21 acts as the Proton acceptor in catalysis. Catalysis depends on Asp114, which acts as the Charge relay. UDP-alpha-D-glucose is bound by residues Ser292, Trp344, Gln347, His362, Trp365, Asn366, Ser367, Glu370, Asp386, and Gln387.

The protein belongs to the UDP-glycosyltransferase family. In terms of tissue distribution, mainly expressed in flowers, flower buds and young leaves, and, to a lesser extent, in old leaves, stems and roots.

The protein operates within secondary metabolite biosynthesis; terpenoid biosynthesis. Functionally, component of the oleanane-type triterpene saponins (e.g. saponarioside A and saponarioside B) biosynthetic pathway, leading to the production of natural products with detergent properties used as traditional sources of soap. A glycosyltransferase that, together with SDR1, mediates the conversion of QA-tri to QA-triF; UGT74CD1 may transfer 4-keto-6-deoxy-glucose to QA-tri, which is in turn reduced to D-fucose by SDR1, thus leading to QA-triF formation via the initiation of the C-28 sugar chain. This chain is UDP-glucosyl transferase 74CD1, found in Saponaria officinalis (Common soapwort).